Here is a 137-residue protein sequence, read N- to C-terminus: Large ribosomal subunit protein uL16 (137 aa).

It belongs to the universal ribosomal protein uL16 family. In terms of assembly, part of the 50S ribosomal subunit.

Its function is as follows. Binds 23S rRNA and is also seen to make contacts with the A and possibly P site tRNAs. The chain is Large ribosomal subunit protein uL16 from Stutzerimonas stutzeri (strain A1501) (Pseudomonas stutzeri).